Here is a 162-residue protein sequence, read N- to C-terminus: Heat shock protein beta-6 (162 aa).

Residues 1-72 (MEIPVPVQPS…PTAQVSTDSG (72 aa)) are involved in stabilization of the HSPB1:HSBP6 heterodimer. Ser-16 is subject to Phosphoserine. Positions 56 to 162 (RAPSVALPTA…AQLPSPPAAK (107 aa)) constitute a sHSP domain. Gln-66 bears the Deamidated glutamine mark. Residue Ser-157 is modified to Phosphoserine.

Belongs to the small heat shock protein (HSP20) family. In terms of assembly, homodimer. Small heat shock proteins form high molecular mass oligomers containing variable number of monomers; these oligomers display a very flexible quaternary structure easily exchanging their subunits. Heterooligomer with HSPB1; formed through oligomerization of HSPB1:HSBP6 dimers; subunit exchange leads to formation of at least two different heterooligomeric complexes, differing in variable quantities of HSPB1 and HSPB6 homodimers in addition to HSPB1:HSPB6 heterodimers. Heterooligomer with CRYAB; large heterooligomers consist of CRYAB homodimers and HSPB5:HSPB6 heterodimers but lacking HSPB6 homodimers. Interacts with BAG3. Interacts (phosphorylated) with YWHAZ. Interacts with PDE4A and PDE4D; required for maintenance of the non-phosphorylated state of HSPB6 under basal conditions. Interacts with KDR. Interacts with PRKD1. In terms of processing, phosphorylated at Ser-16 by PKA and probably PKD1K; required to protect cardiomyocytes from apoptosis.

The protein resides in the cytoplasm. It localises to the nucleus. Its subcellular location is the secreted. In terms of biological role, small heat shock protein which functions as a molecular chaperone probably maintaining denatured proteins in a folding-competent state. Seems to have versatile functions in various biological processes. Plays a role in regulating muscle function such as smooth muscle vasorelaxation and cardiac myocyte contractility. May regulate myocardial angiogenesis implicating KDR. Overexpression mediates cardioprotection and angiogenesis after induced damage. Stabilizes monomeric YWHAZ thereby supporting YWHAZ chaperone-like activity. This is Heat shock protein beta-6 (Hspb6) from Mus musculus (Mouse).